The following is a 372-amino-acid chain: Tryptophan--tRNA ligase (372 aa).

Positions 79-87 (PSGKFHFGH) match the 'HIGH' region motif. Positions 247–268 (KLQPGLDGRKMSSSRPDSTIFL) are disordered. A 'KMSKS' region motif is present at residues 256–260 (KMSSS). Over residues 257–267 (MSSSRPDSTIF) the composition is skewed to polar residues.

It belongs to the class-I aminoacyl-tRNA synthetase family.

The protein localises to the cytoplasm. It catalyses the reaction tRNA(Trp) + L-tryptophan + ATP = L-tryptophyl-tRNA(Trp) + AMP + diphosphate + H(+). The polypeptide is Tryptophan--tRNA ligase (Aeropyrum pernix (strain ATCC 700893 / DSM 11879 / JCM 9820 / NBRC 100138 / K1)).